A 247-amino-acid polypeptide reads, in one-letter code: 2,3-bisphosphoglycerate-dependent phosphoglycerate mutase (247 aa).

Residues 8–15 (RHGESQWN), 21–22 (TG), Arg-60, 87–90 (ERHY), Lys-98, 114–115 (RR), and 183–184 (GN) each bind substrate. His-9 serves as the catalytic Tele-phosphohistidine intermediate. The active-site Proton donor/acceptor is the Glu-87.

This sequence belongs to the phosphoglycerate mutase family. BPG-dependent PGAM subfamily.

It catalyses the reaction (2R)-2-phosphoglycerate = (2R)-3-phosphoglycerate. The protein operates within carbohydrate degradation; glycolysis; pyruvate from D-glyceraldehyde 3-phosphate: step 3/5. Functionally, catalyzes the interconversion of 2-phosphoglycerate and 3-phosphoglycerate. The chain is 2,3-bisphosphoglycerate-dependent phosphoglycerate mutase from Chlorobium chlorochromatii (strain CaD3).